We begin with the raw amino-acid sequence, 305 residues long: Putative cuticle collagen 90 (305 aa).

2 disordered regions span residues 95 to 117 (AGPP…GDLG) and 146 to 305 (PPGQ…AKRH). 4 triple-helical region regions span residues 96–125 (GPPG…SGIS), 142–204 (GPAG…PGTA), 208–252 (GAVG…NGRD), and 256–270 (GQPG…VGKD). A compositionally biased stretch (low complexity) spans 150 to 162 (QGPVGPQGFPGVV). Basic and acidic residues predominate over residues 278–288 (ARRDSKTESVH).

Belongs to the cuticular collagen family. Collagen polypeptide chains are complexed within the cuticle by disulfide bonds and other types of covalent cross-links.

Its function is as follows. Nematode cuticles are composed largely of collagen-like proteins. The cuticle functions both as an exoskeleton and as a barrier to protect the worm from its environment. This chain is Putative cuticle collagen 90 (col-90), found in Caenorhabditis elegans.